We begin with the raw amino-acid sequence, 234 residues long: Sugar fermentation stimulation protein A (234 aa).

A DNA-binding region (H-T-H motif) is located at residues 201 to 220 (LLSEAQNKGVEVLAYKAELS).

The protein belongs to the SfsA family.

Binds to DNA non-specifically. Could be a regulatory factor involved in maltose metabolism. This Salmonella typhi protein is Sugar fermentation stimulation protein A.